We begin with the raw amino-acid sequence, 237 residues long: Flagellar L-ring protein (237 aa).

The N-terminal stretch at 1–16 is a signal peptide; that stretch reads MIKRSAVVLMAVILTG. Residue Cys-17 is the site of N-palmitoyl cysteine attachment. Cys-17 is lipidated: S-diacylglycerol cysteine. The disordered stretch occupies residues 122–143; sequence PPDSSGDMSTDSNSSSDGKGSV. The segment covering 124-140 has biased composition (low complexity); that stretch reads DSSGDMSTDSNSSSDGK.

This sequence belongs to the FlgH family. As to quaternary structure, the basal body constitutes a major portion of the flagellar organelle and consists of four rings (L,P,S, and M) mounted on a central rod.

Its subcellular location is the cell outer membrane. It localises to the bacterial flagellum basal body. Functionally, assembles around the rod to form the L-ring and probably protects the motor/basal body from shearing forces during rotation. The sequence is that of Flagellar L-ring protein from Allorhizobium ampelinum (strain ATCC BAA-846 / DSM 112012 / S4) (Agrobacterium vitis (strain S4)).